The following is a 310-amino-acid chain: 4-hydroxyproline epimerase (310 aa).

C88 functions as the Proton acceptor in the catalytic mechanism. Substrate contacts are provided by residues 89–90 (GH), H208, and D232. C236 serves as the catalytic Proton donor. 237–238 (GT) contacts substrate.

This sequence belongs to the proline racemase family. In terms of assembly, homodimer.

The enzyme catalyses trans-4-hydroxy-L-proline = cis-4-hydroxy-D-proline. With respect to regulation, inhibited by iodoacetate, iodoacetamide and by high amounts (10 mM) of pyrrole-2-carboxylic acid (PYC). Not inhibited by PYC at 1 mM. Functionally, allows intracellular utilization of 4-hydroxyproline, one of the major constituents of host collagen, by converting 4-hydroxy-L-proline to 4-hydroxy-D-proline, which can be further metabolized by intracellular 4-hydroxy-D-proline oxidases. This is 4-hydroxyproline epimerase from Burkholderia pseudomallei (strain K96243).